An 81-amino-acid chain; its full sequence is ATP synthase subunit c, chloroplastic (81 aa).

Helical transmembrane passes span 3 to 23 (PLIAAASVIAAGLAVGLASIG) and 57 to 77 (LAFMEALTIYGLVVALALLFA).

It belongs to the ATPase C chain family. F-type ATPases have 2 components, F(1) - the catalytic core - and F(0) - the membrane proton channel. F(1) has five subunits: alpha(3), beta(3), gamma(1), delta(1), epsilon(1). F(0) has four main subunits: a(1), b(1), b'(1) and c(10-14). The alpha and beta chains form an alternating ring which encloses part of the gamma chain. F(1) is attached to F(0) by a central stalk formed by the gamma and epsilon chains, while a peripheral stalk is formed by the delta, b and b' chains.

The protein resides in the plastid. It localises to the chloroplast thylakoid membrane. Functionally, f(1)F(0) ATP synthase produces ATP from ADP in the presence of a proton or sodium gradient. F-type ATPases consist of two structural domains, F(1) containing the extramembraneous catalytic core and F(0) containing the membrane proton channel, linked together by a central stalk and a peripheral stalk. During catalysis, ATP synthesis in the catalytic domain of F(1) is coupled via a rotary mechanism of the central stalk subunits to proton translocation. Key component of the F(0) channel; it plays a direct role in translocation across the membrane. A homomeric c-ring of between 10-14 subunits forms the central stalk rotor element with the F(1) delta and epsilon subunits. The chain is ATP synthase subunit c, chloroplastic from Agrostis stolonifera (Creeping bentgrass).